The chain runs to 265 residues: Apolipoprotein A-I (265 aa).

The first 18 residues, 1-18 (MKAVVLTLAVLFLTGSQA), serve as a signal peptide directing secretion. A run of 2 repeats spans residues 67–88 (LKLL…EQLG) and 89–110 (PVTQ…QEMS). Residues 67–265 (LKLLDNWDSL…DEASKKLNAQ (199 aa)) are 10 X approximate tandem repeats. Residue M109 is modified to Methionine sulfoxide. One copy of the 3; half-length repeat lies at 111–121 (KDLEEVKKKVQ). 5 consecutive repeat copies span residues 122-142 (PYLD…RQKM), 144-165 (PLGA…EKLS), 166-187 (PLAE…QHVA), 188-209 (PYSD…EGGG), and 210-230 (SLAE…EKAK). M135 is modified (methionine sulfoxide). A 9; half-length repeat occupies 231–241 (PALEDLRQGLL). Residues 242–265 (PVLENLKVSILAAIDEASKKLNAQ) form repeat 10.

The protein belongs to the apolipoprotein A1/A4/E family. In terms of assembly, homodimer. Interacts with APOA1BP and CLU. Component of a sperm activating protein complex (SPAP), consisting of APOA1, an immunoglobulin heavy chain, an immunoglobulin light chain and albumin. Interacts with NDRG1. Interacts with SCGB3A2. Interacts with NAXE and YJEFN3. Post-translationally, glycosylated. Palmitoylated. In terms of processing, phosphorylation sites are present in the extracellular medium. In terms of tissue distribution, major protein of plasma HDL, also found in chylomicrons. Synthesized predominantly in the intestine and the liver.

It localises to the secreted. Participates in the reverse transport of cholesterol from tissues to the liver for excretion by promoting cholesterol efflux from tissues and by acting as a cofactor for the lecithin cholesterol acyltransferase (LCAT). As part of the SPAP complex, activates spermatozoa motility. The chain is Apolipoprotein A-I (APOA1) from Sus scrofa (Pig).